We begin with the raw amino-acid sequence, 269 residues long: Calretinin (269 aa).

EF-hand domains lie at 14-49, 61-96, 105-140, 149-184, 193-228, and 230-265; these read LSASQFLDVWRHFDADGNGYIEGKELENFFQELESA, SLGDKMKEFMHKYDKNADGKIEMAELAQILPTEENF, GSSSEFMEAWRRYDTDRSGYIEANELKGFLSDLLKK, KLQEYTQTILRMFDMNGDGKLGLSEMSRLLPVQENF, LSSEEFNAIFAFYDKDGSGFIDEHELDALLKDLYEK, and KKEMSIQQLTNYRRSIMNLSDGGKLYRKELEVVLCS. Ca(2+) contacts are provided by D27, D29, N31, Y33, E38, D74, N76, D78, K80, E85, D118, D120, S122, Y124, E129, D162, N164, D166, K168, E173, D206, D208, S210, and E217.

Belongs to the calbindin family.

The protein localises to the synapse. The protein resides in the cell projection. It is found in the dendrite. Functionally, calcium-binding protein involved in calcium homeostasis and signal transduction. It plays a critical role in buffering intracellular calcium levels and modulating calcium-dependent signaling pathways. Predominantly expressed in specific neuronal populations, influences synaptic plasticity and neuronal excitability, contributing to learning and memory. During embryonic development, it facilitates neuronal differentiation and maturation. This chain is Calretinin (CALB2), found in Gallus gallus (Chicken).